Reading from the N-terminus, the 990-residue chain is TonB-dependent receptor P26 (990 aa).

The TonB box motif lies at 86–93; the sequence is DEVVVIGY. Positions 97–213 constitute a TBDR plug domain; sequence RKSDLTGSVS…ANGVVLVTTK (117 aa). The TBDR beta-barrel domain maps to 220–990; that stretch reads SSKPEVSANI…TITLGLNVTF (771 aa). The disordered stretch occupies residues 878 to 902; sequence TPENPTSDIPRAGGDSVTGTPPNSA. The TonB C-terminal box motif lies at 974 to 990; that stretch reads GSYPNPRTITLGLNVTF.

This sequence belongs to the TonB-dependent receptor family.

The protein resides in the cell outer membrane. In terms of biological role, tonB-dependent receptor probably involved in ulvan degradation. Ulvan is the main polysaccharide component of the Ulvales (green seaweed) cell wall. It is composed of disaccharide building blocks comprising 3-sulfated rhamnose (Rha3S) linked to D-glucuronic acid (GlcA), L-iduronic acid (IduA), or D-xylose (Xyl). The TonB-dependent receptor may mediate transport of ulvan oligosaccharides from the surface of the outer membrane to the periplasm for subsequent degradation. The protein is TonB-dependent receptor P26 of Formosa agariphila (strain DSM 15362 / KCTC 12365 / LMG 23005 / KMM 3901 / M-2Alg 35-1).